The sequence spans 767 residues: MASTRSIELEHFEERDKRPRPGSRRGAPSSSGGSSISGPKGNGLIPSPAHSAHCSFYRTRTLQALSSEKKAKKARFYRNGDRYFKGLVFAISSDRFRSFDALLIELTRSLSDNVNLPQGVRTIYTVDGSRKVTSLDELLEGESYVCASNEPFRKVDYTKNVNPNWSVNIKGGTTRTLAVASAKSEVKESKDFIKPKLVTVIRSGVKPRKAVRILLNKKTAHSFEQVLTDITEAIKLDSGVVKRLCTLDGKQVTCLQDFFGDDDVFIACGPEKYRYAQDDFVLDHSECRVLKSSYSRASAAKYSGSRSPGLSRRSKSPASVKRAGHSSAYSTAKSPVNGTPSSQLSTPKSTKSSSSSPTSPGSFRGLKQISAQGRSSSNVNGGPELDRCMSPEGVNGNRCSESFTLLEKYRIGKVIGDGNFAVVKECMDRSTGKEFALKIIDKAKCCGKEHLIENEVSILRRVKHPNIIMLVEEMETTTELFLVMELVKGGDLFDAITSSTKYTERDGSAMVYNLASALRYLHGLSIVHRDIKPENLLVCEYPDGTKSLKLGDFGLATVVEGPLYTVCGTPTYVAPEIIAETGYGLKVDVWAAGVITYILLCGFPPFRSENNLQEDLFDQILAGKLEFPAPYWDNITDSAKELISQMLQVNVEARCTAGEILSHPWVSDDASQENNMQAEVTGKLKQHFNNALPKQNSTTTGVSVIMNTALDKEGQVFCSKHCRDSSKSSREQTSAREAPPPPESPRPPGPPATSGCDPAGTWRRHRD.

The segment at 1–44 is disordered; the sequence is MASTRSIELEHFEERDKRPRPGSRRGAPSSSGGSSISGPKGNGL. Over residues 7–19 the composition is skewed to basic and acidic residues; sequence IELEHFEERDKRP. Residues 24 to 43 are compositionally biased toward low complexity; the sequence is RRGAPSSSGGSSISGPKGNG. Thr61 carries the phosphothreonine modification. Doublecortin domains lie at 72-158 and 196-279; these read KKAR…VDYT and KLVT…AQDD. Residues 301-311 are compositionally biased toward low complexity; it reads KYSGSRSPGLS. Residues 301–391 form a disordered region; sequence KYSGSRSPGL…GPELDRCMSP (91 aa). Residues 327–338 show a composition bias toward polar residues; sequence SAYSTAKSPVNG. Residues 339–362 show a composition bias toward low complexity; it reads TPSSQLSTPKSTKSSSSSPTSPGS. Residues 369–380 show a composition bias toward polar residues; that stretch reads ISAQGRSSSNVN. Residue Ser377 is modified to Phosphoserine. The region spanning 409–666 is the Protein kinase domain; the sequence is YRIGKVIGDG…AGEILSHPWV (258 aa). ATP contacts are provided by residues 415–423 and Lys438; that span reads IGDGNFAVV. The active-site Proton acceptor is the Asp530. Residue Ser662 is modified to Phosphoserine. Position 681 is a phosphothreonine (Thr681). Positions 721-734 are enriched in basic and acidic residues; sequence HCRDSSKSSREQTS. The disordered stretch occupies residues 721–767; it reads HCRDSSKSSREQTSAREAPPPPESPRPPGPPATSGCDPAGTWRRHRD. Over residues 738–751 the composition is skewed to pro residues; sequence APPPPESPRPPGPP.

It belongs to the protein kinase superfamily. CAMK Ser/Thr protein kinase family. CaMK subfamily. In terms of assembly, interacts with MAPK8IP1/JIP-1, MAPK8IP2/JIP-2, MAPK9/JNK2, PPP1R9B/NEURABIN-2 and actin. Binds to and stabilizes microtubules; binding affinity is strongly reduced by autophosphorylation. Post-translationally, autophosphorylated.

The protein localises to the cytoplasm. The protein resides in the cytoskeleton. The catalysed reaction is L-seryl-[protein] + ATP = O-phospho-L-seryl-[protein] + ADP + H(+). It catalyses the reaction L-threonyl-[protein] + ATP = O-phospho-L-threonyl-[protein] + ADP + H(+). Functionally, protein kinase with a significantly reduced Ca(2+)+/CAM affinity and dependence compared to other members of the CaMK family. May play a role in the down-regulation of CRE-dependent gene activation probably by phosphorylation of the CREB coactivator CRTC2/TORC2 and the resulting retention of TORC2 in the cytoplasm. This Rattus norvegicus (Rat) protein is Serine/threonine-protein kinase DCLK2 (Dclk2).